Reading from the N-terminus, the 808-residue chain is Probable phosphoketolase 1 (808 aa).

It belongs to the XFP family. The cofactor is thiamine diphosphate.

This Nostoc sp. (strain PCC 7120 / SAG 25.82 / UTEX 2576) protein is Probable phosphoketolase 1.